Consider the following 165-residue polypeptide: MHTMEVKEYRVGIADLNVAKSPDRIITVGLGSCIGIALYDRINGVGGLLHIMLPDSTQFKNVSNPLKFPDLGIIIMTDKMKEKGANIRNIKAKISGGASMFNFSDKSMVMDIGRRNIEAVRKKLKELSIPIVAEEVGGNKGRTMTLDTSNGIVQIKTVGVGMKEI.

Belongs to the CheD family.

The enzyme catalyses L-glutaminyl-[protein] + H2O = L-glutamyl-[protein] + NH4(+). In terms of biological role, probably deamidates glutamine residues to glutamate on methyl-accepting chemotaxis receptors (MCPs), playing an important role in chemotaxis. The sequence is that of Probable chemoreceptor glutamine deamidase CheD from Clostridium tetani (strain Massachusetts / E88).